The chain runs to 683 residues: FAD-binding monooxygenase ausC (683 aa).

N5 carries N-linked (GlcNAc...) asparagine glycosylation. A helical membrane pass occupies residues I111–G131. FAD contacts are provided by residues T150–W153, D162–T163, and Y168. Residue M160 to D162 coordinates NADP(+). The N-linked (GlcNAc...) asparagine glycan is linked to N286. Residues T310–Q316 and R333–T334 each bind NADP(+). N-linked (GlcNAc...) asparagine glycans are attached at residues N525 and N572.

The protein belongs to the FAD-binding monooxygenase family. Requires FAD as cofactor.

The protein localises to the membrane. The catalysed reaction is preaustinoid A + AH2 + O2 = preaustinoid A1 + A + H2O. It participates in secondary metabolite biosynthesis; terpenoid biosynthesis. In terms of biological role, FAD-binding monooxygenase; part of the gene cluster A that mediates the biosynthesis of austinol and dehydroaustinol, two fungal meroterpenoids. The first step of the pathway is the synthesis of 3,5-dimethylorsellinic acid by the polyketide synthase ausA. 3,5-dimethylorsellinic acid is then prenylated by the polyprenyl transferase ausN. Further epoxidation by the FAD-dependent monooxygenase ausM and cyclization by the probable terpene cyclase ausL lead to the formation of protoaustinoid A. Protoaustinoid A is then oxidized to spiro-lactone preaustinoid A3 by the combined action of the FAD-binding monooxygenases ausB and ausC, and the dioxygenase ausE. Acid-catalyzed keto-rearrangement and ring contraction of the tetraketide portion of preaustinoid A3 by ausJ lead to the formation of preaustinoid A4. The aldo-keto reductase ausK, with the help of ausH, is involved in the next step by transforming preaustinoid A4 into isoaustinone which is in turn hydroxylated by the P450 monooxygenase ausI to form austinolide. Finally, the cytochrome P450 monooxygenase ausG modifies austinolide to austinol. Austinol can be further modified to dehydroaustinol which forms a diffusible complex with diorcinol that initiates conidiation. Due to genetic rearrangements of the clusters and the subsequent loss of some enzymes, the end products of the Emericella nidulans austinoid biosynthesis clusters are austinol and dehydroaustinol, even if additional enzymes, such as the O-acetyltransferase ausQ and the cytochrome P450 monooxygenase ausR are still functional. The sequence is that of FAD-binding monooxygenase ausC from Emericella nidulans (strain FGSC A4 / ATCC 38163 / CBS 112.46 / NRRL 194 / M139) (Aspergillus nidulans).